The following is a 258-amino-acid chain: Imidazole glycerol phosphate synthase subunit HisF (258 aa).

Residues Asp11 and Asp130 contribute to the active site.

It belongs to the HisA/HisF family. In terms of assembly, heterodimer of HisH and HisF.

The protein resides in the cytoplasm. It carries out the reaction 5-[(5-phospho-1-deoxy-D-ribulos-1-ylimino)methylamino]-1-(5-phospho-beta-D-ribosyl)imidazole-4-carboxamide + L-glutamine = D-erythro-1-(imidazol-4-yl)glycerol 3-phosphate + 5-amino-1-(5-phospho-beta-D-ribosyl)imidazole-4-carboxamide + L-glutamate + H(+). Its pathway is amino-acid biosynthesis; L-histidine biosynthesis; L-histidine from 5-phospho-alpha-D-ribose 1-diphosphate: step 5/9. Functionally, IGPS catalyzes the conversion of PRFAR and glutamine to IGP, AICAR and glutamate. The HisF subunit catalyzes the cyclization activity that produces IGP and AICAR from PRFAR using the ammonia provided by the HisH subunit. The polypeptide is Imidazole glycerol phosphate synthase subunit HisF (Xanthomonas axonopodis pv. citri (strain 306)).